Here is a 1170-residue protein sequence, read N- to C-terminus: Putative DNA topoisomerase 2, mitochondrial (1170 aa).

Residues Asn106, Asn135, 163 to 165 (SSN), 176 to 183 (GRNGYGAK), and 396 to 398 (QTK) each bind ATP. The Toprim domain occupies 475 to 590 (CTLILTEGDS…SLVHTDGFIQ (116 aa)). 3 residues coordinate Mg(2+): Glu481, Asp559, and Asp561. In terms of domain architecture, Topo IIA-type catalytic spans 722-1157 (IPSLIDGLKP…DWKSVWRSEL (436 aa)). The active-site O-(5'-phospho-DNA)-tyrosine intermediate is the Tyr813.

The protein belongs to the type II topoisomerase family. Homodimer. It depends on Mg(2+) as a cofactor. Mn(2+) is required as a cofactor. Requires Ca(2+) as cofactor.

The protein localises to the mitochondrion. The catalysed reaction is ATP-dependent breakage, passage and rejoining of double-stranded DNA.. Functionally, control of topological states of DNA by transient breakage and subsequent rejoining of DNA strands. Topoisomerase II makes double-strand breaks. The sequence is that of Putative DNA topoisomerase 2, mitochondrial from Caenorhabditis elegans.